The chain runs to 384 residues: S-adenosylmethionine synthase (384 aa).

An ATP-binding site is contributed by His15. Asp17 contacts Mg(2+). Glu43 provides a ligand contact to K(+). Residues Glu56 and Gln99 each contribute to the L-methionine site. The interval 99-109 (QSADINQGVDR) is flexible loop. Residues 164–166 (DAK), 230–231 (RF), Asp239, 245–246 (RK), Ala262, and Lys266 each bind ATP. Asp239 provides a ligand contact to L-methionine. L-methionine is bound at residue Lys270.

Belongs to the AdoMet synthase family. In terms of assembly, homotetramer; dimer of dimers. It depends on Mg(2+) as a cofactor. K(+) is required as a cofactor.

It localises to the cytoplasm. The enzyme catalyses L-methionine + ATP + H2O = S-adenosyl-L-methionine + phosphate + diphosphate. It participates in amino-acid biosynthesis; S-adenosyl-L-methionine biosynthesis; S-adenosyl-L-methionine from L-methionine: step 1/1. In terms of biological role, catalyzes the formation of S-adenosylmethionine (AdoMet) from methionine and ATP. The overall synthetic reaction is composed of two sequential steps, AdoMet formation and the subsequent tripolyphosphate hydrolysis which occurs prior to release of AdoMet from the enzyme. In Haemophilus influenzae (strain PittEE), this protein is S-adenosylmethionine synthase.